The sequence spans 256 residues: Aspirochlorine biosynthesis protein F (256 aa).

N19 carries N-linked (GlcNAc...) asparagine glycosylation. Transmembrane regions (helical) follow at residues 21 to 41, 163 to 183, and 214 to 234; these read SITP…GPHF, LVWV…FFFT, and FGLG…ILAV.

It is found in the membrane. It participates in mycotoxin biosynthesis. In terms of biological role, part of the gene cluster that mediates the biosynthesis of aspirochlorine (or antibiotic A30641), an unusual halogenated spiro compound with distinctive antifungal properties due to selective inhibition of protein biosynthesis, and which is also active against bacteria, viruses, and murine tumor cells. The non-ribosomal peptide synthetase (NRPS) aclP is responsible the formation of the diketopiperazine (DKP) core from the condensation of 2 phenylalanine residues. One Phe residue is tailored into chlorotyrosine by hydroxylation and chlorination, whereas the second Phe undergoes an unprecedented C-C bond cleavage to be converted into glycine. After formation of the DKP, sulfur is incorporated into the DKP by conjugation with glutathione by aclG, followed by its stepwise degradation to the thiol by aclI, aclJ and aclK, and the dithiol oxidation by aclT. In addition, oxygenases (aclB, aclC, aclL and aclO) and O-methyltransferases (aclM and aclU) act as tailoring enzymes to produce the intermediate dechloroaspirochlorine. Ultimately, chlorination of dechloroaspirochlorine by the halogenase aclH is the last step in the aspirochlorine pathway. This chain is Aspirochlorine biosynthesis protein F, found in Aspergillus oryzae (strain ATCC 42149 / RIB 40) (Yellow koji mold).